The primary structure comprises 2541 residues: Talin-1 (2541 aa).

The FERM domain occupies 86–403 (RPLKIRMLDG…GYIDIILKKK (318 aa)). Residues 280 to 435 (FMAHKNCGNM…PKKSTVLQQQ (156 aa)) are interaction with LAYN. Residues 482–655 (RGHMPPLTSA…QTSGELLQQI (174 aa)) form a helical bundle R1 region. The helical bundle R2 stretch occupies residues 656–786 (GESDTDPRFQ…ALNDLLQHIK (131 aa)). Residues 787–911 (QHATGGQPIG…NAAAQNAIKK (125 aa)) form a helical bundle R3 region. The segment at 913–1043 (LVHKLEHAAK…RTAAQKAQEA (131 aa)) is helical bundle R4. The tract at residues 1045 to 1205 (GPLEIDSALG…NRCVNCLPGQ (161 aa)) is helical bundle R5. A helical bundle R6 region spans residues 1206–1356 (RDVDAAIRMV…QLITMCTQQA (151 aa)). Residues 1357–1452 (PGQKECDNAL…AYLVGVSDPN (96 aa)) are helical bundle R7A. Residues 1358 to 1658 (GQKECDNALR…NMRDKAPGQR (301 aa)) are interaction with VCL and F-actin. The tract at residues 1460–1579 (LVDPTQFARA…NLTAFASNPE (120 aa)) is helical bundle R8. O-linked (GlcNAc) threonine glycosylation is present at Thr-1486. The interval 1580 to 1652 (FATVPAQISP…IKKLITNMRD (73 aa)) is helical bundle R7B. Residues 1654-1821 (APGQRECDEA…TLNEAASAAG (168 aa)) form a helical bundle R9 region. The interval 1822–1972 (VVGGMVDSIT…VLAALQAGNR (151 aa)) is helical bundle R10. Thr-1889 is a glycosylation site (O-linked (GlcNAc) threonine). The segment at 1973–2139 (GTQACITAAS…TVKAVEDEAT (167 aa)) is helical bundle R11. Positions 2140 to 2293 (KGTRALEATI…QAAEAMKGTE (154 aa)) are helical bundle R12. An I/LWEQ domain is found at 2292–2531 (TEWVDPEDPT…MIRQQQYKFL (240 aa)). The helical bundle R13 stretch occupies residues 2299-2481 (DPTVIAENEL…AAQKAAAFQD (183 aa)).

In terms of assembly, interacts with PIP5K1C and NRAP. Binds with high affinity to vinculin VCL and with low affinity to integrins. Interacts with APBB1IP; this inhibits VCL binding. Interacts with F-actin. Interacts with LAYN. Interacts with THSD1. Phosphorylated.

It is found in the cell projection. The protein resides in the ruffle membrane. Its subcellular location is the cytoplasm. It localises to the cytoskeleton. The protein localises to the cell surface. It is found in the cell junction. The protein resides in the focal adhesion. High molecular weight cytoskeletal protein concentrated at regions of cell-substratum contact and, in lymphocytes, at cell-cell contacts. Involved in connections of major cytoskeletal structures to the plasma membrane. The polypeptide is Talin-1 (TLN1) (Gallus gallus (Chicken)).